The following is a 29-amino-acid chain: Toxin Bcg III 15.67 (29 aa).

One can recognise an EGF-like domain in the interval 2–29; sequence QGTACTGEHAHSFCLNGGTCRHIQQLGE. C6 and C21 are disulfide-bonded.

The protein resides in the secreted. It localises to the nematocyst. Functionally, has both toxic and EGF activity. This chain is Toxin Bcg III 15.67, found in Bunodosoma cangicum (Sea anemone).